Reading from the N-terminus, the 197-residue chain is Cell division protein SepF (197 aa).

Positions 15-91 (DEEEVESPEE…PPSKSNGKNV (77 aa)) are disordered. Residues 22–31 (PEERQRRVVQ) are compositionally biased toward basic and acidic residues. A compositionally biased stretch (low complexity) spans 37–47 (TNNVQQNQPQQ). Polar residues-rich tracts occupy residues 48–58 (SERSYSNQSKL) and 78–91 (RMNQ…GKNV).

The protein belongs to the SepF family. As to quaternary structure, homodimer. Interacts with FtsZ.

The protein resides in the cytoplasm. Cell division protein that is part of the divisome complex and is recruited early to the Z-ring. Probably stimulates Z-ring formation, perhaps through the cross-linking of FtsZ protofilaments. Its function overlaps with FtsA. The chain is Cell division protein SepF from Staphylococcus haemolyticus (strain JCSC1435).